A 648-amino-acid polypeptide reads, in one-letter code: Protein associated with UVRAG as autophagy enhancer (648 aa).

2 stretches are compositionally biased toward polar residues: residues 131 to 146 (QESL…TSPS) and 157 to 173 (PHLT…SSSR). The interval 131 to 173 (QESLLKNPKTVATSPSPKEGSARSESPHLTASTDDGDARSSSR) is disordered. Ser-144 is subject to Phosphoserine. The tract at residues 183 to 222 (ETFMLPADVEKENLHFYAADIIISVIENMKCNLPNQQQPE) is interaction with UVRAG. Residues Lys-469, Lys-509, Lys-519, Lys-559, and Lys-619 each carry the N6-acetyllysine modification.

Interacts with UVRAG; the interaction is direct and promotes association with the PI3K/PI3KC3 and HOPS complexes. Interacts with STX17. In terms of processing, phosphorylated by MTOR at Ser-144 under nutrient-rich conditions. Phosphorylation prevents acetylation by KAT5/TIP60 and impairs RUBCNL/PACER function and autophagosome maturation. Under autophagy induction, Phosphorylation by MTOR is repressed, enabling acetylation by KAT5/TIP60. Post-translationally, acetylated by KAT5/TIP60 under autophagy induction, promoting autophagosome maturation and lipid metabolism. Acetylation is prevented by phosphorylation by MTOR. Lys-469 and Lys-559 constitute the key sites for tuning function in autophagy.

The protein resides in the cytoplasmic vesicle. The protein localises to the autophagosome membrane. Functionally, regulator of autophagy that promotes autophagosome maturation by facilitating the biogenesis of phosphatidylinositol 3-phosphate (PtdIns(3)P) in late steps of autophagy. Acts by antagonizing RUBCN, thereby stimulating phosphatidylinositol 3-kinase activity of the PI3K/PI3KC3 complex. Following anchorage to the autophagosomal SNARE STX17, promotes the recruitment of PI3K/PI3KC3 and HOPS complexes to the autophagosome to regulate the fusion specificity of autophagosomes with late endosomes/lysosomes. Binds phosphoinositides phosphatidylinositol 3-phosphate (PtdIns(3)P), 4-phosphate (PtdIns(4)P) and 5-phosphate (PtdIns(5)P). In addition to its role in autophagy, acts as a regulator of lipid and glycogen homeostasis. May act as a tumor suppressor. The chain is Protein associated with UVRAG as autophagy enhancer from Mus musculus (Mouse).